The sequence spans 228 residues: Woronin body membrane protein wscA (228 aa).

A run of 4 helical transmembrane segments spans residues 89-109 (MTLY…GILQ), 130-150 (LIVS…IAGA), 162-182 (AGFM…LAFA), and 185-205 (FLPE…IGTY).

Belongs to the peroxisomal membrane protein PXMP2/4 family. As to quaternary structure, self-assembles into detergent-resistant oligomers and forms a complex with hexA assemblies.

It is found in the peroxisome membrane. It localises to the cell septum. Functionally, woronin sorting complex protein involved in both Woronin bodies (WB) formation and inherence. Localizes to large peroxisome membranes where it self-assembles into detergent-resistant oligomers that envelop hex-1 assemblies, producing asymmetrical nascent WBs. These structures are then delivered to the cell cortex, which permits partitioning of the nascent WB and WB inheritance. This is Woronin body membrane protein wscA from Aspergillus fumigatus (strain ATCC MYA-4609 / CBS 101355 / FGSC A1100 / Af293) (Neosartorya fumigata).